Reading from the N-terminus, the 772-residue chain is Probable serine/threonine-protein kinase HAL5-like (772 aa).

4 disordered regions span residues 1–102 (MASS…TRHV), 115–165 (RAGT…EPNN), 185–241 (IDTQ…RSNT), and 344–396 (NADE…SANV). The span at 9–19 (SEPRISRESSL) shows a compositional bias: basic and acidic residues. 2 stretches are compositionally biased toward low complexity: residues 20–33 (KRSL…KGLF) and 41–59 (NTGP…ISTP). Residues 66–86 (TKDKQDRLKNLAANKEKELQT) show a composition bias toward basic and acidic residues. The segment covering 146-158 (RQSSSNRSSSFSN) has biased composition (low complexity). Residues 202–212 (RRSRSTQRKRL) show a composition bias toward basic residues. One can recognise a Protein kinase domain in the interval 454–758 (GKSIGIIGQG…VDSLLKSSWM (305 aa)). ATP-binding positions include 460-468 (IGQGAYGVV) and lysine 498. Aspartate 609 functions as the Proton acceptor in the catalytic mechanism.

This sequence belongs to the protein kinase superfamily. CAMK Ser/Thr protein kinase family. NPR/HAL subfamily. HAL5 sub-subfamily.

It catalyses the reaction L-seryl-[protein] + ATP = O-phospho-L-seryl-[protein] + ADP + H(+). It carries out the reaction L-threonyl-[protein] + ATP = O-phospho-L-threonyl-[protein] + ADP + H(+). The chain is Probable serine/threonine-protein kinase HAL5-like from Kluyveromyces lactis (strain ATCC 8585 / CBS 2359 / DSM 70799 / NBRC 1267 / NRRL Y-1140 / WM37) (Yeast).